A 258-amino-acid polypeptide reads, in one-letter code: Phosphate import ATP-binding protein PstB 3 (258 aa).

In terms of domain architecture, ABC transporter spans 10 to 253 (MTARSLAVHY…PANSLTQGYI (244 aa)). 42–49 (GPSGCGKS) lines the ATP pocket.

The protein belongs to the ABC transporter superfamily. Phosphate importer (TC 3.A.1.7) family. As to quaternary structure, the complex is composed of two ATP-binding proteins (PstB), two transmembrane proteins (PstC and PstA) and a solute-binding protein (PstS).

Its subcellular location is the cell inner membrane. The enzyme catalyses phosphate(out) + ATP + H2O = ADP + 2 phosphate(in) + H(+). Part of the ABC transporter complex PstSACB involved in phosphate import. Responsible for energy coupling to the transport system. This is Phosphate import ATP-binding protein PstB 3 from Paramagnetospirillum magneticum (strain ATCC 700264 / AMB-1) (Magnetospirillum magneticum).